Here is a 368-residue protein sequence, read N- to C-terminus: Membrane glycoprotein UL18 (368 aa).

An N-terminal signal peptide occupies residues 1–19 (MMTMWCLTLFVLWMLRVVG). Residues 326-346 (ISSVLLALLLCALLFAFLHYF) form a helical membrane-spanning segment.

Interacts with host LILRB1.

It is found in the host membrane. Plays a role in the protection against host NK cell cytotoxicity by interacting with and modulating the activity of the host inhibitory leukocyte Ig-like receptor 1/LILRB1, which is expressed on monocytes, dendritic cells, as well as subsets of T and NK cells. UL18 exerts an inhibitory effect on LIR-1+ NK cells, while it stimulates LIR-1- NK cell. The sequence is that of Membrane glycoprotein UL18 (UL18) from Homo sapiens (Human).